Consider the following 556-residue polypeptide: Myb/SANT-like DNA-binding domain-containing protein 2 (556 aa).

2 stretches are compositionally biased toward polar residues: residues methionine 1–leucine 10 and glycine 36–threonine 45. The disordered stretch occupies residues methionine 1–serine 82. Over residues proline 56–glycine 74 the composition is skewed to gly residues. The region spanning serine 99–arginine 169 is the Myb-like domain. The interval proline 431–alanine 458 is disordered.

The protein is Myb/SANT-like DNA-binding domain-containing protein 2 (MSANTD2) of Gallus gallus (Chicken).